Here is a 626-residue protein sequence, read N- to C-terminus: Nuclear RNA export factor 1 (626 aa).

Basic and acidic residues predominate over residues 1–16; it reads MADEGKSYSEHDDERV. The interval 1–85 is disordered; that stretch reads MADEGKSYSE…TTRPNRRGDA (85 aa). A2 carries the post-translational modification N-acetylalanine. The segment at 2 to 60 is minor non-specific RNA-binding; sequence ADEGKSYSEHDDERVNFPQRKKKGRGPFRWKYGEGNRRSGRGGSGIRSSRLEEDDGDVA. Residues 2–118 form an RNA-binding (RBD) region; the sequence is ADEGKSYSEH…GTSQDGTSKN (117 aa). Residues 2–198 form an interaction with ALYREF/THOC4 and LUZP4 region; it reads ADEGKSYSEH…IIINPSAPPH (197 aa). The residue at position 9 (S9) is a Phosphoserine. Over residues 20 to 29 the composition is skewed to basic residues; the sequence is QRKKKGRGPF. At R42 the chain carries Asymmetric dimethylarginine; alternate. Residue R42 is modified to Omega-N-methylarginine; alternate. Positions 61 to 118 are major non-specific RNA-binding; that stretch reads MSDAQDGPRVRYNPYTTRPNRRGDAWHDRDRIHVTVRRDRAPPERGGAGTSQDGTSKN. Positions 61 to 118 are RNA binding; it reads MSDAQDGPRVRYNPYTTRPNRRGDAWHDRDRIHVTVRRDRAPPERGGAGTSQDGTSKN. A Nuclear localization signal motif is present at residues 67 to 100; the sequence is GPRVRYNPYTTRPNRRGDAWHDRDRIHVTVRRDR. Positions 83-110 match the Nuclear export signal motif; the sequence is GDAWHDRDRIHVTVRRDRAPPERGGAGT. In terms of domain architecture, RRM spans 119–198; sequence WFKITIPYGR…IIINPSAPPH (80 aa). Y126 is subject to 3'-nitrotyrosine. LRR repeat units lie at residues 266–291, 292–315, 316–350, and 351–378; these read ELLS…QKVP, NLKI…IKGL, KLEE…AIRE, and RFPK…TTLP. The NTF2 domain maps to 393-543; sequence LVLHFLQQYY…LCIVNDELFV (151 aa). A TAP-C domain is found at 572–626; sequence PEQQEMLQAFSTQSGMNLEWSQKCLQDNNWDYTRSAQAFTHLKAKGEIPEVAFMK.

It belongs to the NXF family. As to quaternary structure, heterodimer (via NTF2 domain) with NXT1. The formation of NXF1-NXT1 heterodimers is required for the NXF1-mediated nuclear mRNA export. Forms a complex with RANBP2/NUP358, NXT1 and RANGAP1. Associates with the exon junction complex (EJC) and with the transcription/export (TREX) complex. Found in a mRNA complex with UPF3A and UPF3B. Found in a post-splicing complex with RBM8A, UPF1, UPF2, UPF3A, UPF3B and RNPS1. Interacts (via N-terminus) with DHX9 (via N-terminus); this interaction is direct and negatively regulates NXF1-mediated nuclear export of constitutive transport element (CTE)-containing cellular mRNAs. Interacts with ALYREF/THOC4. Interacts with FYTTD1/UIF. Interacts with EIF4A3. Interacts with NUPL2. Interacts with THOC5. Interacts with CHTOP. Interacts with FRG1 (via N-terminus). Interacts with LUZP4. Interacts with FMR1; the interaction occurs in a mRNA-dependent and polyribosomes-independent manner in the nucleus. Interacts with CPSF6 (via N-terminus); this interaction is direct. Interacts with RBM15. Interacts with RBM15B. Interacts with MCM3AP; this interaction is not mediated by RNA.

The protein resides in the nucleus. It localises to the nucleoplasm. It is found in the nucleus speckle. Its subcellular location is the cytoplasm. In terms of biological role, involved in the nuclear export of mRNA species bearing retroviral constitutive transport elements (CTE) and in the export of mRNA from the nucleus to the cytoplasm (TAP/NFX1 pathway). The NXF1-NXT1 heterodimer is involved in the export of HSP70 mRNA in conjunction with ALYREF/THOC4 and THOC5 components of the TREX complex. ALYREF/THOC4-bound mRNA is thought to be transferred to the NXF1-NXT1 heterodimer for export. Also involved in nuclear export of m6A-containing mRNAs: interaction between SRSF3 and YTHDC1 facilitates m6A-containing mRNA-binding to both SRSF3 and NXF1, promoting mRNA nuclear export. In Pongo abelii (Sumatran orangutan), this protein is Nuclear RNA export factor 1 (NXF1).